Reading from the N-terminus, the 527-residue chain is NAD(P)H-quinone oxidoreductase chain 4 1 (527 aa).

14 helical membrane passes run 5-25 (FPWL…LPII), 35-55 (WYSL…FCTG), 90-110 (LIIL…PVSF), 112-132 (PKLF…VFAV), 136-156 (LLFF…LSIW), 168-188 (FILY…TMAF), 211-231 (LLLY…FPLH), 242-262 (TAPA…YALL), 274-294 (AVFA…AALT), 310-330 (ISHM…GLSG), 331-351 (AVLQ…LVGA), 386-406 (LALP…GFAT), 416-436 (VLVI…LLSM), and 463-483 (VFII…PKIV).

This sequence belongs to the complex I subunit 4 family.

It is found in the cellular thylakoid membrane. The enzyme catalyses a plastoquinone + NADH + (n+1) H(+)(in) = a plastoquinol + NAD(+) + n H(+)(out). It carries out the reaction a plastoquinone + NADPH + (n+1) H(+)(in) = a plastoquinol + NADP(+) + n H(+)(out). Functionally, NDH-1 shuttles electrons from NAD(P)H, via FMN and iron-sulfur (Fe-S) centers, to quinones in the respiratory chain. The immediate electron acceptor for the enzyme in this species is believed to be plastoquinone. Couples the redox reaction to proton translocation (for every two electrons transferred, four hydrogen ions are translocated across the cytoplasmic membrane), and thus conserves the redox energy in a proton gradient. The polypeptide is NAD(P)H-quinone oxidoreductase chain 4 1 (Trichodesmium erythraeum (strain IMS101)).